The sequence spans 73 residues: Putative antimicrobial peptide clone 5 (73 aa).

Positions 1-22 (MQIKHLITLFFLVLIGADQCSA) are cleaved as a signal peptide. Residues 45–73 (EVSPQIDQYRNFQKREAELEELLDRLPMY) constitute a propeptide that is removed on maturation.

The protein belongs to the non-disulfide-bridged peptide (NDBP) superfamily. Short antimicrobial peptide (group 4) family. In terms of tissue distribution, expressed by the venom gland.

The protein localises to the secreted. In terms of biological role, antibacterial peptide. In Tityus costatus (Brazilian scorpion), this protein is Putative antimicrobial peptide clone 5.